Reading from the N-terminus, the 62-residue chain is DNA-directed RNA polymerase subunit Rpo10 (62 aa).

Residues C6, C9, C43, and C44 each coordinate Zn(2+).

This sequence belongs to the archaeal Rpo10/eukaryotic RPB10 RNA polymerase subunit family. In terms of assembly, part of the RNA polymerase complex. Zn(2+) is required as a cofactor.

The protein resides in the cytoplasm. It catalyses the reaction RNA(n) + a ribonucleoside 5'-triphosphate = RNA(n+1) + diphosphate. In terms of biological role, DNA-dependent RNA polymerase (RNAP) catalyzes the transcription of DNA into RNA using the four ribonucleoside triphosphates as substrates. The sequence is that of DNA-directed RNA polymerase subunit Rpo10 from Methanosarcina acetivorans (strain ATCC 35395 / DSM 2834 / JCM 12185 / C2A).